A 208-amino-acid chain; its full sequence is MKDLHWHGHATSRLARVEMNGHRPCTIWFTGLSGSGKSTIANALDGWLHRRGCHTYVLDGDNVRQGLNKDLGFSEQDRVENIRRVGEVAKLFNDAGLIVSCAFISPYEKDRHLVRQLLNEDEYVEVFLSTSLADCERRDPKGLYRKARAGELANFTGIDSPYEPPVRPNLAFDTSTHTVNEVVGAIFDYLVAKGIVRQHGAVGRASVG.

31 to 38 (GLSGSGKS) provides a ligand contact to ATP. The active-site Phosphoserine intermediate is the serine 105.

This sequence belongs to the APS kinase family.

The enzyme catalyses adenosine 5'-phosphosulfate + ATP = 3'-phosphoadenylyl sulfate + ADP + H(+). Its pathway is sulfur metabolism; hydrogen sulfide biosynthesis; sulfite from sulfate: step 2/3. Its function is as follows. Catalyzes the synthesis of activated sulfate. In Pseudomonas entomophila (strain L48), this protein is Adenylyl-sulfate kinase.